The chain runs to 358 residues: MPAHMLQEISSSYTTTTTITEPPSGNLQNGREKMKKVPLYLEEDIRPEMREDIHDPSYQDEEGPPPKLEYVWRNIILMALLHVGALYGITLIPSSKVYTLLWGIFYYLISALGITAGAHRLWSHRTYKARLPLRIFLIIANTMAFQNDVYEWARDHRAHHKFSETHADPHNSRRGFFFSHVGWLLVRKHPAVKEKGGKLDMSDLKAEKLVMFQRRYYKPGLLLMCFILPTLVPWYCWGETFLHSLFVSTFLRYTLVLNATWLVNSAAHLYGYRPYDKNIQSRENILVSLGAVGEGFHNYHHAFPYDYSASEYRWHINFTTFFIDCMAALGLAYDRKKVSKAAVLARIKRTGDGSHKSS.

Topologically, residues 1-71 (MPAHMLQEIS…EGPPPKLEYV (71 aa)) are cytoplasmic. Over residues 8–24 (EISSSYTTTTTITEPPS) the composition is skewed to low complexity. The tract at residues 8-33 (EISSSYTTTTTITEPPSGNLQNGREK) is disordered. Residues 72–92 (WRNIILMALLHVGALYGITLI) traverse the membrane as a helical segment. N74 contacts substrate. Residues 93 to 96 (PSSK) are Lumenal-facing. Residues 97 to 117 (VYTLLWGIFYYLISALGITAG) traverse the membrane as a helical segment. At 118–216 (AHRLWSHRTY…EKLVMFQRRY (99 aa)) the chain is on the cytoplasmic side. Residues H119 and H124 each coordinate Fe cation. Positions 119–124 (HRLWSH) match the Histidine box-1 motif. Substrate is bound by residues N147, R154, and D155. Fe cation is bound by residues H156, H159, and H160. The Histidine box-2 signature appears at 156–160 (HRAHH). 2 residues coordinate substrate: R187 and K188. The chain crosses the membrane as a helical span at residues 217-236 (YKPGLLLMCFILPTLVPWYC). Residues 237–240 (WGET) lie on the Lumenal side of the membrane. The chain crosses the membrane as a helical span at residues 241–262 (FLHSLFVSTFLRYTLVLNATWL). Position 261 (W261) interacts with substrate. At 263 to 358 (VNSAAHLYGY…RTGDGSHKSS (96 aa)) the chain is on the cytoplasmic side. Fe cation contacts are provided by H268, H297, H300, and H301. The short motif at 297-301 (HNYHH) is the Histidine box-3 element.

This sequence belongs to the fatty acid desaturase type 1 family. Fe(2+) is required as a cofactor. In terms of tissue distribution, detected in liver (at protein level). Detected in adipose tissue. Detected in liver when rats are kept on a fat-free diet, but not when their food contains unsaturated fatty acids.

It localises to the endoplasmic reticulum membrane. The protein resides in the membrane. It catalyses the reaction octadecanoyl-CoA + 2 Fe(II)-[cytochrome b5] + O2 + 2 H(+) = (9Z)-octadecenoyl-CoA + 2 Fe(III)-[cytochrome b5] + 2 H2O. Functionally, stearoyl-CoA desaturase that utilizes O(2) and electrons from reduced cytochrome b5 to introduce the first double bond into saturated fatty acyl-CoA substrates. Catalyzes the insertion of a cis double bond at the Delta-9 position into fatty acyl-CoA substrates including palmitoyl-CoA and stearoyl-CoA. Gives rise to a mixture of 16:1 and 18:1 unsaturated fatty acids. Plays an important role in lipid biosynthesis. Plays an important role in regulating the expression of genes that are involved in lipogenesis and in regulating mitochondrial fatty acid oxidation. Plays an important role in body energy homeostasis. Contributes to the biosynthesis of membrane phospholipids, cholesterol esters and triglycerides. Required for normal development of sebaceous glands. Required for the biosynthesis of normal levels of Delta-9 unsaturated fatty acids and 1-alkyl-2,3-diacylglycerol in the Harderian gland. Required for normal production of meibum, an oily material that prevents drying of the cornea. The polypeptide is Acyl-CoA desaturase 1 (Scd1) (Rattus norvegicus (Rat)).